The primary structure comprises 201 residues: FMN-dependent NADH:quinone oxidoreductase (201 aa).

Residues Ser10, 16–18 (SQS), 96–99 (MYNF), and 140–143 (SRGG) contribute to the FMN site.

It belongs to the azoreductase type 1 family. Homodimer. It depends on FMN as a cofactor.

It carries out the reaction 2 a quinone + NADH + H(+) = 2 a 1,4-benzosemiquinone + NAD(+). The enzyme catalyses N,N-dimethyl-1,4-phenylenediamine + anthranilate + 2 NAD(+) = 2-(4-dimethylaminophenyl)diazenylbenzoate + 2 NADH + 2 H(+). In terms of biological role, quinone reductase that provides resistance to thiol-specific stress caused by electrophilic quinones. Functionally, also exhibits azoreductase activity. Catalyzes the reductive cleavage of the azo bond in aromatic azo compounds to the corresponding amines. The polypeptide is FMN-dependent NADH:quinone oxidoreductase (Shigella flexneri serotype 5b (strain 8401)).